The sequence spans 122 residues: Movement protein TGB2 (122 aa).

The Cytoplasmic portion of the chain corresponds to 1 to 12; sequence MVKSTVPTRPNK. A helical transmembrane segment spans residues 13 to 33; sequence YWPGVVAIGLVSLFIFLSVSN. The Lumenal portion of the chain corresponds to 34-76; the sequence is QKHSTTSGDNIHKFSNGGTYRDGSKCITYNRNSPLAYNGSSSN. Residues 77–97 traverse the membrane as a helical segment; sequence NTLFWLCLLGLSMVWIAYCGY. The Cytoplasmic segment spans residues 98 to 122; that stretch reads KSLSGQWHSCQHDKNERNFLFECFE.

The protein belongs to the virgaviridae/benyvirus TGB2 movement protein family. Interacts with movement protein TGB3. TGB1-TGB3-TGB2 complex formation is enhanced by ATP hydrolysis.

The protein localises to the host cell junction. Its subcellular location is the host plasmodesma. The protein resides in the host endoplasmic reticulum membrane. It localises to the host cytoplasm. It is found in the host cytoskeleton. In terms of biological role, participates in the transport of viral genome to neighboring plant cells directly through plasmodesmata, without any budding. TGBp2 and TGBp3 are necessary for intracellular delivery of TGBp1-containing vRNPs to plasmodesmata. Can gate plasmodesmata and increase their size exclusion limit. To a lesser extent than TGB3, induces host actin cytoskeleton network thickening, which probably plays a major role in virus cell-to-cell movement. The protein is Movement protein TGB2 of Peanut clump virus (isolate 87/TGTA2) (PCV).